Reading from the N-terminus, the 475-residue chain is Adenosylhomocysteinase (475 aa).

Substrate contacts are provided by Thr-60, Asp-133, and Glu-198. 199 to 201 provides a ligand contact to NAD(+); it reads TTT. Residues Lys-228 and Asp-232 each coordinate substrate. Residues Asn-233, 262–267, Glu-285, Asn-320, 341–343, and Asn-389 each bind NAD(+); these read GYGDVG and IGH.

This sequence belongs to the adenosylhomocysteinase family. NAD(+) serves as cofactor.

It localises to the cytoplasm. It carries out the reaction S-adenosyl-L-homocysteine + H2O = L-homocysteine + adenosine. It participates in amino-acid biosynthesis; L-homocysteine biosynthesis; L-homocysteine from S-adenosyl-L-homocysteine: step 1/1. In terms of biological role, may play a key role in the regulation of the intracellular concentration of adenosylhomocysteine. In Syntrophotalea carbinolica (strain DSM 2380 / NBRC 103641 / GraBd1) (Pelobacter carbinolicus), this protein is Adenosylhomocysteinase.